Here is a 293-residue protein sequence, read N- to C-terminus: NAD kinase (293 aa).

Aspartate 73 (proton acceptor) is an active-site residue. NAD(+)-binding positions include 73-74, histidine 78, 147-148, arginine 158, arginine 175, aspartate 177, 188-193, and glutamine 248; these read DG, ND, and TAYALS.

It belongs to the NAD kinase family. The cofactor is a divalent metal cation.

The protein localises to the cytoplasm. It catalyses the reaction NAD(+) + ATP = ADP + NADP(+) + H(+). Involved in the regulation of the intracellular balance of NAD and NADP, and is a key enzyme in the biosynthesis of NADP. Catalyzes specifically the phosphorylation on 2'-hydroxyl of the adenosine moiety of NAD to yield NADP. The sequence is that of NAD kinase from Nitrosococcus oceani (strain ATCC 19707 / BCRC 17464 / JCM 30415 / NCIMB 11848 / C-107).